The following is a 101-amino-acid chain: Small ribosomal subunit protein uS14 (101 aa).

The protein belongs to the universal ribosomal protein uS14 family. Part of the 30S ribosomal subunit. Contacts proteins S3 and S10.

In terms of biological role, binds 16S rRNA, required for the assembly of 30S particles and may also be responsible for determining the conformation of the 16S rRNA at the A site. This Methylorubrum extorquens (strain PA1) (Methylobacterium extorquens) protein is Small ribosomal subunit protein uS14.